Consider the following 659-residue polypeptide: ATP-binding cassette sub-family D member 3 (659 aa).

Positions 1-61 (MAAFSKYLTA…GKKERAVVDK (61 aa)) are interaction with PEX19. N-linked (GlcNAc...) asparagine glycosylation occurs at Asn-12. Lys-61 is subject to N6-acetyllysine. The chain crosses the membrane as a helical span at residues 84-104 (GYLLLIAVMLVSRTYCDVWMI). Residues 85–372 (YLLLIAVMLV…MLLRMSQALG (288 aa)) enclose the ABC transmembrane type-1 domain. N-linked (GlcNAc...) asparagine glycosylation occurs at Asn-106. Residues 126–146 (LFNFIAAMPLISLVNNFLKYG) form a helical membrane-spanning segment. An N-linked (GlcNAc...) asparagine glycan is attached at Asn-206. The helical transmembrane segment at 224–244 (AIGAQGPASMMAYLLVSGLFL) threads the bilayer. Lys-260 bears the N6-acetyllysine mark. The helical transmembrane segment at 313–333 (MGFIDSIIAKYVATVVGYLVV) threads the bilayer. Lys-399 is modified (N6-acetyllysine). Ser-424 carries the phosphoserine modification. The ABC transporter domain maps to 434–659 (INTDNIIKFD…ITEDTVEFGS (226 aa)). An ATP-binding site is contributed by 473–480 (GPNGCGKS). An N6-acetyllysine modification is found at Lys-533. The residue at position 659 (Ser-659) is a Phosphoserine.

Belongs to the ABC transporter superfamily. ABCD family. Peroxisomal fatty acyl CoA transporter (TC 3.A.1.203) subfamily. In terms of assembly, homodimers. Can form heterodimers with ABCD1 and ABCD2. Dimerization is necessary to form an active transporter. Interacts with PEX19; mediates the targeting of ABCD3 to peroxisomes. Post-translationally, ubiquitinated by PEX2 during pexophagy in response to starvation, leading to its degradation.

Its subcellular location is the peroxisome membrane. It catalyses the reaction a very long-chain fatty acyl-CoA + H2O = a very long-chain fatty acid + CoA + H(+). The catalysed reaction is a very long-chain fatty acid(in) + ATP + H2O = a very long-chain fatty acid(out) + ADP + phosphate + H(+). The enzyme catalyses a long-chain fatty acyl-CoA + H2O = a long-chain fatty acid + CoA + H(+). It carries out the reaction a long-chain fatty acid(in) + ATP + H2O = a long-chain fatty acid(out) + ADP + phosphate + H(+). It catalyses the reaction pristanoyl-CoA + H2O = 2,6,10,14-tetramethylpentadecanoate + CoA + H(+). The catalysed reaction is 2,6,10,14-tetramethylpentadecanoate(in) + ATP + H2O = 2,6,10,14-tetramethylpentadecanoate(out) + ADP + phosphate + H(+). The enzyme catalyses hexadecanedioyl-CoA + H2O = hexadecanedioate + CoA + H(+). It carries out the reaction hexadecanedioate(in) + ATP + H2O = hexadecanedioate(out) + ADP + phosphate + H(+). It catalyses the reaction (5Z,8Z,11Z,14Z,17Z)-eicosapentaenoyl-CoA + H2O = (5Z,8Z,11Z,14Z,17Z)-eicosapentaenoate + CoA + H(+). The catalysed reaction is (5Z,8Z,11Z,14Z,17Z)-eicosapentaenoate(in) + ATP + H2O = (5Z,8Z,11Z,14Z,17Z)-eicosapentaenoate(out) + ADP + phosphate + H(+). The enzyme catalyses (4Z,7Z,10Z,13Z,16Z,19Z)-docosahexaenoyl-CoA + H2O = (4Z,7Z,10Z,13Z,16Z,19Z)-docosahexaenoate + CoA + H(+). It carries out the reaction (4Z,7Z,10Z,13Z,16Z,19Z)-docosahexaenoate(in) + ATP + H2O = (4Z,7Z,10Z,13Z,16Z,19Z)-docosahexaenoate(out) + ADP + phosphate + H(+). Broad substrate specificity ATP-dependent transporter of the ATP-binding cassette (ABC) family that catalyzes the transport of long-chain fatty acids (LCFA)-CoA, dicarboxylic acids-CoA, long-branched-chain fatty acids-CoA and bile acids from the cytosol to the peroxisome lumen for beta-oxydation. Has fatty acyl-CoA thioesterase and ATPase activities. Probably hydrolyzes fatty acyl-CoAs into free fatty acids prior to their ATP-dependent transport into peroxisomes. Thus, play a role in regulation of LCFAs and energy metabolism namely, in the degradation and biosynthesis of fatty acids by beta-oxidation. The chain is ATP-binding cassette sub-family D member 3 (Abcd3) from Mus musculus (Mouse).